The primary structure comprises 583 residues: Ribonuclease ZC3H12A (583 aa).

Positions 1-11 (MSLWELEDRRS) are enriched in basic and acidic residues. Disordered regions lie at residues 1-29 (MSLW…EATT) and 73-119 (GSAA…GSDL). The span at 15-29 (TPRPAQEPTAEEATT) shows a compositional bias: low complexity. The interval 26-71 (EATTAELQMKVDFFRKLGYSSAEIHSVLQKLGIQADTNTVLGELVK) is ubiquitin association domain. Residues 65-134 (VLGELVKHGS…DGSNVAMSHG (70 aa)) form a necessary for interaction with TANK region. Over residues 73–82 (GSAAERERQA) the composition is skewed to basic and acidic residues. Residue Ser-83 is modified to Phosphoserine. Positions 96–281 (GGGTPKAPTV…LDNFLRKKPL (186 aa)) are RNase. The region spanning 119–274 (LRPIVIDGSN…LGRHGPSLDN (156 aa)) is the RNase NYN domain. The segment at 198 to 204 (RRVGGKR) is RNA binding. A Mg(2+)-binding site is contributed by Asp-210. 2 disordered regions span residues 262–290 (DDPL…KQPC) and 323–404 (ANAL…PSEW). The C3H1-type zinc finger occupies 284 to 309 (EHKKQPCPYGRKCTYGIKCRFLHPER). Residues 285-441 (HKKQPCPYGR…SELWGVRGGG (157 aa)) are necessary for interaction with ZC3H12D. Residues 341–352 (RPSPSSQPGSLP) are compositionally biased toward low complexity. A compositionally biased stretch (basic and acidic residues) spans 353–364 (TEHEQCSPDRKK). The span at 384-393 (PTGRSLPPSG) shows a compositional bias: low complexity. 2 positions are modified to phosphoserine: Ser-422 and Ser-426. The tract at residues 503-530 (YQLPPPTQRLQEPQAPGPGADRGPWGGA) is disordered.

The protein belongs to the ZC3H12 family. Oligomer. Found in a deubiquitination complex with TANK, USP10 and ZC3H12A; this complex inhibits genotoxic stress- or interleukin-1-beta-mediated NF-kappaB activation by promoting IKBKG or TRAF6 deubiquitination. Interacts with IKBKG; this interaction increases in response to DNA damage. Interacts with TANK; this interaction increases in response to DNA damage and serves as a bridge to anchor both TANK and USP10 into a deubiquitinating complex. Interacts with TRAF6; this interaction increases in response to DNA damage and is stimulated by TANK. Interacts with USP10; this interaction increases in response to DNA damage and serves as a bridge to anchor both TANK and USP10 into a deubiquitinating complex. Interacts with ZC3H12D. Interacts with TNRC6A. Interacts with IKBKB/IKKB. Interacts with IKBKB/IKKB. Interacts with BTRC; the interaction occurs when ZC3H12A is phosphorylated in a IKBKB/IKKB-dependent manner. Interacts with IRAK1; this interaction increases the interaction between ZC3H12A and IKBKB/IKKB. Interacts with UPF1; this interaction occurs in a mRNA translationally active- and termination-dependent manner and is essential for ZC3H12A-mediated degradation of target mRNAs. Associates with ribosomes. Interacts with ubiquitin. Mg(2+) is required as a cofactor. In terms of processing, phosphorylated by IRAK1; phosphorylation is necessary for subsequent phosphorylation by the I-kappa-B-kinase (IKK) complex. Phosphorylated by I-kappa-B-kinase (IKK) subunits IKBKB/IKKB and CHUK/IKKA at Ser-422 and Ser-426; these phosphorylations promote ubiquitin proteasome-mediated degradation of ZC3H12A and hence facilitates rapid and robust production of IL-6 mRNA in response to toll-like receptor (TLR) or IL-1 receptor stimuli. Ubiquitinated; ubiquitination is induced in response to interleukin IL1 receptor stimuli in a IKBKB/IKKB and IRAK1-dependent manner, leading to proteasome-mediated degradation. Post-translationally, proteolytically cleaved between Arg-95 and Arg-198 by MALT1 in activated T-cells; cleavage at Arg-95 is critical for promoting ZC3H12A degradation in response to T-cell receptor (TCR) stimulation, and hence is necessary for prolonging the stability of a set of mRNAs controlling T-cell activation and Th17 cell differentiation.

It is found in the nucleus. It localises to the cytoplasm. The protein resides in the P-body. Its subcellular location is the rough endoplasmic reticulum membrane. The protein localises to the cytoplasmic granule. Functionally, endoribonuclease involved in various biological functions such as cellular inflammatory response and immune homeostasis, glial differentiation of neuroprogenitor cells, cell death of cardiomyocytes, adipogenesis and angiogenesis. Functions as an endoribonuclease involved in mRNA decay. Modulates the inflammatory response by promoting the degradation of a set of translationally active cytokine-induced inflammation-related mRNAs, such as IL6 and IL12B, during the early phase of inflammation. Prevents aberrant T-cell-mediated immune reaction by degradation of multiple mRNAs controlling T-cell activation, such as those encoding cytokines (IL6 and IL2), cell surface receptors (ICOS, TNFRSF4 and TNFR2) and transcription factor (REL). Inhibits cooperatively with ZC3H12A the differentiation of helper T cells Th17 in lungs. They repress target mRNA encoding the Th17 cell-promoting factors IL6, ICOS, REL, IRF4, NFKBID and NFKBIZ. The cooperation requires RNA-binding by RC3H1 and the nuclease activity of ZC3H12A. Together with RC3H1, destabilizes TNFRSF4/OX40 mRNA by binding to the conserved stem loop structure in its 3'UTR. Self regulates by destabilizing its own mRNA. Cleaves mRNA harboring a stem-loop (SL), often located in their 3'-UTRs, during the early phase of inflammation in a helicase UPF1-dependent manner. Plays a role in the inhibition of microRNAs (miRNAs) biogenesis. Cleaves the terminal loop of a set of precursor miRNAs (pre-miRNAs) important for the regulation of the inflammatory response leading to their degradation, and thus preventing the biosynthesis of mature miRNAs. Also plays a role in promoting angiogenesis in response to inflammatory cytokines by inhibiting the production of antiangiogenic microRNAs via its anti-dicer RNase activity. Affects the overall ubiquitination of cellular proteins. Positively regulates deubiquitinase activity promoting the cleavage at 'Lys-48'- and 'Lys-63'-linked polyubiquitin chains on TNF receptor-associated factors (TRAFs), preventing JNK and NF-kappa-B signaling pathway activation, and hence negatively regulating macrophage-mediated inflammatory response and immune homeostasis. Also induces deubiquitination of the transcription factor HIF1A, probably leading to its stabilization and nuclear import, thereby positively regulating the expression of proangiogenic HIF1A-targeted genes. Involved in a TANK-dependent negative feedback response to attenuate NF-kappaB activation through the deubiquitination of IKBKG or TRAF6 in response to interleukin-1-beta (IL1B) stimulation or upon DNA damage. Prevents stress granules (SGs) formation and promotes macrophage apoptosis under stress conditions, including arsenite-induced oxidative stress, heat shock, and energy deprivation. Plays a role in the regulation of macrophage polarization; promotes IL4-induced polarization of macrophages M1 into anti-inflammatory M2 state. May also act as a transcription factor that regulates the expression of multiple genes involved in inflammatory response, angiogenesis, adipogenesis and apoptosis. Functions as a positive regulator of glial differentiation of neuroprogenitor cells through an amyloid precursor protein (APP)-dependent signaling pathway. Attenuates septic myocardial contractile dysfunction in response to lipopolysaccharide (LPS) by reducing I-kappa-B-kinase (IKK)-mediated NF-kappa-B activation, and hence myocardial pro-inflammatory cytokine production. The protein is Ribonuclease ZC3H12A of Bos taurus (Bovine).